A 304-amino-acid polypeptide reads, in one-letter code: ADP-ribosyl cyclase/cyclic ADP-ribose hydrolase 1 (304 aa).

The Cytoplasmic portion of the chain corresponds to 1-21 (MANYEFSQVSGDRPGCRLSRK). A helical; Signal-anchor for type II membrane protein transmembrane segment spans residues 22–44 (AQIGLGVGLLVLIALVVGIVVIL). At 45–304 (LRPRSLLVWT…PEHPSCRLNT (260 aa)) the chain is on the extracellular side. 3 disulfides stabilise this stretch: Cys-70–Cys-86, Cys-103–Cys-184, and Cys-164–Cys-177. A glycan (N-linked (GlcNAc...) asparagine) is linked at Asn-104. Cys-123 is an active-site residue. Asn-124 carries N-linked (GlcNAc...) asparagine glycosylation. The active site involves Cys-205. N-linked (GlcNAc...) asparagine glycans are attached at residues Asn-213 and Asn-223. Intrachain disulfides connect Cys-258–Cys-279 and Cys-291–Cys-300.

Belongs to the ADP-ribosyl cyclase family. As to quaternary structure, homodimer.

It is found in the membrane. The enzyme catalyses NAD(+) = cyclic ADP-beta-D-ribose + nicotinamide + H(+). It carries out the reaction nicotinate + NADP(+) = nicotinate-adenine dinucleotide phosphate + nicotinamide. It catalyses the reaction NAD(+) + H2O = ADP-D-ribose + nicotinamide + H(+). In terms of biological role, synthesizes the second messengers cyclic ADP-ribose (cADPR) and nicotinate-adenine dinucleotide phosphate (NAADP), the former a second messenger for glucose-induced insulin secretion, the latter a Ca(2+) mobilizer. Also has cADPR hydrolase activity. This chain is ADP-ribosyl cyclase/cyclic ADP-ribose hydrolase 1 (Cd38), found in Mus musculus (Mouse).